Here is a 276-residue protein sequence, read N- to C-terminus: Urease accessory protein UreD (276 aa).

Belongs to the UreD family. UreD, UreF and UreG form a complex that acts as a GTP-hydrolysis-dependent molecular chaperone, activating the urease apoprotein by helping to assemble the nickel containing metallocenter of UreC. The UreE protein probably delivers the nickel.

It localises to the cytoplasm. Required for maturation of urease via the functional incorporation of the urease nickel metallocenter. In Bradyrhizobium diazoefficiens (strain JCM 10833 / BCRC 13528 / IAM 13628 / NBRC 14792 / USDA 110), this protein is Urease accessory protein UreD.